The primary structure comprises 332 residues: Phosphate acyltransferase (332 aa).

This sequence belongs to the PlsX family. As to quaternary structure, homodimer. Probably interacts with PlsY.

It localises to the cytoplasm. The catalysed reaction is a fatty acyl-[ACP] + phosphate = an acyl phosphate + holo-[ACP]. The protein operates within lipid metabolism; phospholipid metabolism. In terms of biological role, catalyzes the reversible formation of acyl-phosphate (acyl-PO(4)) from acyl-[acyl-carrier-protein] (acyl-ACP). This enzyme utilizes acyl-ACP as fatty acyl donor, but not acyl-CoA. The chain is Phosphate acyltransferase from Caldanaerobacter subterraneus subsp. tengcongensis (strain DSM 15242 / JCM 11007 / NBRC 100824 / MB4) (Thermoanaerobacter tengcongensis).